We begin with the raw amino-acid sequence, 209 residues long: Thiamine-phosphate synthase (209 aa).

Residues 41-45 (QLREK) and N73 each bind 4-amino-2-methyl-5-(diphosphooxymethyl)pyrimidine. Mg(2+)-binding residues include D74 and D93. S112 contributes to the 4-amino-2-methyl-5-(diphosphooxymethyl)pyrimidine binding site. 138-140 (TGT) contacts 2-[(2R,5Z)-2-carboxy-4-methylthiazol-5(2H)-ylidene]ethyl phosphate. K141 provides a ligand contact to 4-amino-2-methyl-5-(diphosphooxymethyl)pyrimidine. Residues G168 and 188 to 189 (VS) each bind 2-[(2R,5Z)-2-carboxy-4-methylthiazol-5(2H)-ylidene]ethyl phosphate.

The protein belongs to the thiamine-phosphate synthase family. It depends on Mg(2+) as a cofactor.

It carries out the reaction 2-[(2R,5Z)-2-carboxy-4-methylthiazol-5(2H)-ylidene]ethyl phosphate + 4-amino-2-methyl-5-(diphosphooxymethyl)pyrimidine + 2 H(+) = thiamine phosphate + CO2 + diphosphate. It catalyses the reaction 2-(2-carboxy-4-methylthiazol-5-yl)ethyl phosphate + 4-amino-2-methyl-5-(diphosphooxymethyl)pyrimidine + 2 H(+) = thiamine phosphate + CO2 + diphosphate. The enzyme catalyses 4-methyl-5-(2-phosphooxyethyl)-thiazole + 4-amino-2-methyl-5-(diphosphooxymethyl)pyrimidine + H(+) = thiamine phosphate + diphosphate. It participates in cofactor biosynthesis; thiamine diphosphate biosynthesis; thiamine phosphate from 4-amino-2-methyl-5-diphosphomethylpyrimidine and 4-methyl-5-(2-phosphoethyl)-thiazole: step 1/1. Functionally, condenses 4-methyl-5-(beta-hydroxyethyl)thiazole monophosphate (THZ-P) and 2-methyl-4-amino-5-hydroxymethyl pyrimidine pyrophosphate (HMP-PP) to form thiamine monophosphate (TMP). This chain is Thiamine-phosphate synthase, found in Alkaliphilus oremlandii (strain OhILAs) (Clostridium oremlandii (strain OhILAs)).